The primary structure comprises 249 residues: Benzil reductase ((S)-benzoin forming) (249 aa).

NADP(+) is bound by residues Ile6, Asn87, Tyr154, Lys158, Val189, and Thr191. The active-site Proton acceptor is Tyr154.

It belongs to the short-chain dehydrogenases/reductases (SDR) family.

The protein localises to the cytoplasm. The enzyme catalyses (S)-benzoin + NADP(+) = benzil + NADPH + H(+). The catalysed reaction is 2-hydroxy-1-phenyl-1-propanone + NADP(+) = 1-phenyl-1,2-propanedione + NADPH + H(+). Inhibited by Cibacron blue 3GA, a general SDR family inhibitor. Its function is as follows. Reduces benzil stereospecifically to (S)-benzoin. Can also reduce 1-phenyl-1,2-propanedione, 1,4-naphthoquinone, 1-(4-methyl-phenyl)-2-phenyl-ethane-1,2-dione, 1-(4-fluoro-phenyl)-2-phenyl-ethane-1,2-dione, methyl benzoylformate and p-nitrobenzaldehyde in decreasing order. The sequence is that of Benzil reductase ((S)-benzoin forming) from Bacillus cereus.